Consider the following 187-residue polypeptide: Phosphatidylethanolamine-binding protein 2 (187 aa).

A phosphoserine mark is found at S13, S52, and S54.

This sequence belongs to the phosphatidylethanolamine-binding protein family. Testis specific.

It localises to the cytoplasm. Functionally, may bind to phospholipids. May act as serine protease inhibitor. This is Phosphatidylethanolamine-binding protein 2 (Pbp2) from Mus musculus (Mouse).